A 464-amino-acid chain; its full sequence is Phospho-cellobiase (464 aa).

The Proton donor role is filled by glutamate 172. Glutamate 361 functions as the Nucleophile in the catalytic mechanism.

This sequence belongs to the glycosyl hydrolase 1 family.

In Klebsiella oxytoca, this protein is Phospho-cellobiase (casB).